We begin with the raw amino-acid sequence, 177 residues long: Large ribosomal subunit protein uL6 (177 aa).

The protein belongs to the universal ribosomal protein uL6 family. As to quaternary structure, part of the 50S ribosomal subunit.

This protein binds to the 23S rRNA, and is important in its secondary structure. It is located near the subunit interface in the base of the L7/L12 stalk, and near the tRNA binding site of the peptidyltransferase center. The protein is Large ribosomal subunit protein uL6 of Sodalis glossinidius (strain morsitans).